The following is a 283-amino-acid chain: MSAQLIDGNALAKQIRSEAAVRAARLTERGHQPGLAVVLVGEDPASQVYVRNKVKACEDNGFHSSLDRYPADLSEAELLARIDALNNDPKIHGILVQLPLPKHIDSHKVLEAIAPEKDVDGFHVANAGALMTGAPLFRPCTPYGCMKMLESISYPLRGARAVVVGASNIVGKPMAMLLLQAGATVTICNSKTRDIGAHTRDADVIVAAVGKRNLITADMVKPGAVVIDVGMNRDDNGKLCGDVDFAGVREVAGYITPVPGGVGPMTITMLLINTLEAAERAAG.

Residues 165-167 (GAS) and serine 190 contribute to the NADP(+) site.

It belongs to the tetrahydrofolate dehydrogenase/cyclohydrolase family. Homodimer.

The catalysed reaction is (6R)-5,10-methylene-5,6,7,8-tetrahydrofolate + NADP(+) = (6R)-5,10-methenyltetrahydrofolate + NADPH. It carries out the reaction (6R)-5,10-methenyltetrahydrofolate + H2O = (6R)-10-formyltetrahydrofolate + H(+). It participates in one-carbon metabolism; tetrahydrofolate interconversion. Functionally, catalyzes the oxidation of 5,10-methylenetetrahydrofolate to 5,10-methenyltetrahydrofolate and then the hydrolysis of 5,10-methenyltetrahydrofolate to 10-formyltetrahydrofolate. In Cupriavidus pinatubonensis (strain JMP 134 / LMG 1197) (Cupriavidus necator (strain JMP 134)), this protein is Bifunctional protein FolD.